The following is a 471-amino-acid chain: UDP-N-acetylmuramate--L-alanine ligase (471 aa).

122 to 128 (GTHGKTT) contributes to the ATP binding site.

This sequence belongs to the MurCDEF family.

The protein localises to the cytoplasm. The catalysed reaction is UDP-N-acetyl-alpha-D-muramate + L-alanine + ATP = UDP-N-acetyl-alpha-D-muramoyl-L-alanine + ADP + phosphate + H(+). Its pathway is cell wall biogenesis; peptidoglycan biosynthesis. Functionally, cell wall formation. The sequence is that of UDP-N-acetylmuramate--L-alanine ligase from Cutibacterium acnes (strain DSM 16379 / KPA171202) (Propionibacterium acnes).